The sequence spans 185 residues: NEDD8-conjugating enzyme UBE2F (185 aa).

Methionine 1 bears the N-acetylmethionine mark. The segment at 1 to 29 (MLTLASKLKRDDGLKGSRTAATASDSTRR) is interaction with UBA3. The UBC core domain occupies 32-185 (VRDKLLVKEV…VDDYIKRYAR (154 aa)). Cysteine 116 functions as the Glycyl thioester intermediate in the catalytic mechanism.

This sequence belongs to the ubiquitin-conjugating enzyme family. UBE2F subfamily. As to quaternary structure, interacts with UBA3 and RBX2. Interacts (N-terminally acetylated form) with (via DCUN1 domain) DCUN1D1, DCUN1D2, DCUN1D3, DCUN1D4 and DCUN1D5. Post-translationally, the acetylation of Met-1 increases affinity for DCUN1D3 by about 2 orders of magnitude and is crucial for NEDD8 transfer to cullins. As to expression, widely expressed (at protein level).

It catalyses the reaction [E1 NEDD8-activating enzyme]-S-[NEDD8 protein]-yl-L-cysteine + [E2 NEDD8-conjugating enzyme]-L-cysteine = [E1 NEDD8-activating enzyme]-L-cysteine + [E2 NEDD8-conjugating enzyme]-S-[NEDD8-protein]-yl-L-cysteine.. It functions in the pathway protein modification; protein neddylation. Functionally, accepts the ubiquitin-like protein NEDD8 from the UBA3-NAE1 E1 complex and catalyzes its covalent attachment to other proteins. Together with the E3 ubiquitin ligase RNF7/RBX2, specifically neddylates cullin-5 (CUL5). Does not neddylate CUL1, CUL2, CUL3, CUL4A or CUL4B. Mediates neddylation of the CUL9-RBX1 complex. (Microbial infection) Following infection by HIV-1 virus, participates to HIV-1 Vif protein-mediated ubiquitination and degradation of APOBEC3G by mediating neddylation of cullin-5 (CUL5). This chain is NEDD8-conjugating enzyme UBE2F (UBE2F), found in Homo sapiens (Human).